A 628-amino-acid chain; its full sequence is (-)-beta-pinene synthase 1, chloroplastic (628 aa).

Residues 1–51 (MDLISVLPSASKSCVCLHKPLSSSTHKLKPFCRTIRILGMPRPRKSVLMVS) constitute a chloroplast transit peptide. D379, D383, and D531 together coordinate Mg(2+). A DDXXD motif motif is present at residues 379–383 (DDMYD).

This sequence belongs to the terpene synthase family. Tpsd subfamily. Requires Mg(2+) as cofactor. Mn(2+) is required as a cofactor.

The protein resides in the plastid. It localises to the chloroplast. The catalysed reaction is (2E)-geranyl diphosphate = (1S,5S)-beta-pinene + diphosphate. The enzyme catalyses (2E)-geranyl diphosphate = (1S,5S)-alpha-pinene + diphosphate. Its pathway is terpene metabolism; oleoresin biosynthesis. It functions in the pathway secondary metabolite biosynthesis; terpenoid biosynthesis. Its function is as follows. Monoterpene synthase (TPS) involved in the biosynthesis of monoterpene natural products included in conifer oleoresin secretions and volatile emissions; these compounds contribute to biotic and abiotic stress defense against herbivores and pathogens. Catalyzes the conversion of (2E)-geranyl diphosphate (GPP) to (-)-beta-pinene and, to a lower extent, to (-)-alpha-pinene. This is (-)-beta-pinene synthase 1, chloroplastic from Pinus banksiana (Jack pine).